The chain runs to 394 residues: MKTQVAIIGAGPSGLLLGQLLHKAGIDNVILERQTPDYVLGRIRAGVLEQGMVDLLREAGVDRRMARDGLVHEGVEIAFAGQRRRIDLKRLSGGKTVTVYGQTEVTRDLMEAREACGATTVYQAAEVRLHDLQGERPYVTFERDGERLRLDCDYIAGCDGFHGISRQSIPAERLKVFERVYPFGWLGLLADTPPVSHELIYANHPRGFALCSQRSATRSRYYVQVPLTEKVEDWSDERFWTELKARLPAEVAEKLVTGPSLEKSIAPLRSFVVEPMQHGRLFLAGDAAHIVPPTGAKGLNLAASDVSTLYRLLLKAYREGRGELLERYSAICLRRIWKAERFSWWMTSVLHRFPDTDAFSQRIQQTELEYYLGSEAGLATIAENYVGLPYEEIE.

FAD-binding positions include Ser13, Glu32, 42-47 (RIRAGV), and Gln102. Substrate-binding positions include Tyr201, 212-214 (SQR), and Tyr222. Position 286 (Asp286) interacts with FAD. Pro293 contacts substrate. Position 299–300 (299–300 (LN)) interacts with FAD.

Belongs to the aromatic-ring hydroxylase family. Homodimer. FAD serves as cofactor.

The catalysed reaction is 4-hydroxybenzoate + NADPH + O2 + H(+) = 3,4-dihydroxybenzoate + NADP(+) + H2O. Its pathway is aromatic compound metabolism; benzoate degradation via hydroxylation; 3,4-dihydroxybenzoate from benzoate: step 2/2. In terms of biological role, catalyzes the incorporation of an atom of dioxygen into p-hydroxybenzoate (p-OHB) to form 3,4-dihydroxybenzoate (3,4DOHB). The reaction occurs in two parts: reduction of the flavin adenine dinucleotide (FAD) in the enzyme by reduced nicotinamide adenine dinucleotide phosphate (NADPH) in response to binding p-hydroxybenzoate to the enzyme and oxidation of reduced FAD with oxygen to form a hydroperoxide, which then oxygenates p-hydroxybenzoate. This chain is p-hydroxybenzoate hydroxylase (pobA), found in Pseudomonas fluorescens.